Here is a 559-residue protein sequence, read N- to C-terminus: NXPE family member 3 (559 aa).

An N-terminal signal peptide occupies residues 1 to 30; sequence MWTNFFKLRLFCCLLAVLMVVVLVVNVTQV. Asparagine 26, asparagine 237, and asparagine 346 each carry an N-linked (GlcNAc...) asparagine glycan.

It belongs to the NXPE family.

The protein resides in the secreted. The protein is NXPE family member 3 (NXPE3) of Pongo abelii (Sumatran orangutan).